The sequence spans 176 residues: Phosphopantetheine adenylyltransferase (176 aa).

Ser8 is a binding site for substrate. ATP is bound by residues 8-9 (SF) and His16. Substrate is bound by residues Lys40, Thr72, and Arg86. ATP-binding positions include 87–89 (GLR), Glu97, and 122–128 (YSFLSSS).

Belongs to the bacterial CoaD family. As to quaternary structure, homohexamer. Requires Mg(2+) as cofactor.

It is found in the cytoplasm. The enzyme catalyses (R)-4'-phosphopantetheine + ATP + H(+) = 3'-dephospho-CoA + diphosphate. It functions in the pathway cofactor biosynthesis; coenzyme A biosynthesis; CoA from (R)-pantothenate: step 4/5. Functionally, reversibly transfers an adenylyl group from ATP to 4'-phosphopantetheine, yielding dephospho-CoA (dPCoA) and pyrophosphate. This is Phosphopantetheine adenylyltransferase from Acaryochloris marina (strain MBIC 11017).